The chain runs to 298 residues: Lipoyl synthase (298 aa).

[4Fe-4S] cluster contacts are provided by Cys40, Cys45, Cys51, Cys67, Cys71, Cys74, and Ser280. One can recognise a Radical SAM core domain in the interval 53 to 269; the sequence is AVRRTATFMI…KEIALSKGFT (217 aa).

It belongs to the radical SAM superfamily. Lipoyl synthase family. The cofactor is [4Fe-4S] cluster.

It localises to the cytoplasm. The enzyme catalyses [[Fe-S] cluster scaffold protein carrying a second [4Fe-4S](2+) cluster] + N(6)-octanoyl-L-lysyl-[protein] + 2 oxidized [2Fe-2S]-[ferredoxin] + 2 S-adenosyl-L-methionine + 4 H(+) = [[Fe-S] cluster scaffold protein] + N(6)-[(R)-dihydrolipoyl]-L-lysyl-[protein] + 4 Fe(3+) + 2 hydrogen sulfide + 2 5'-deoxyadenosine + 2 L-methionine + 2 reduced [2Fe-2S]-[ferredoxin]. It participates in protein modification; protein lipoylation via endogenous pathway; protein N(6)-(lipoyl)lysine from octanoyl-[acyl-carrier-protein]. In terms of biological role, catalyzes the radical-mediated insertion of two sulfur atoms into the C-6 and C-8 positions of the octanoyl moiety bound to the lipoyl domains of lipoate-dependent enzymes, thereby converting the octanoylated domains into lipoylated derivatives. In Geobacillus sp. (strain WCH70), this protein is Lipoyl synthase.